We begin with the raw amino-acid sequence, 185 residues long: CASP-like protein 2C1 (185 aa).

Residues 1 to 12 (MVAARVSEVKAE) are Cytoplasmic-facing. Residues 13 to 33 (GVLRGACAALAAAAALLVGLS) traverse the membrane as a helical segment. Topologically, residues 34-52 (TQTETVLLVRKKATVKDVQ) are extracellular. Residues 53–73 (ALWVLAMAAAAAAGYHLLQLL) traverse the membrane as a helical segment. Residues 74–105 (KCFYLGRRVGGGASPCRRSSRALAWTCLLLDK) lie on the Cytoplasmic side of the membrane. A helical membrane pass occupies residues 106 to 126 (ACAYTTFATTVAAAQACVIAL). Over 127-147 (DGAHALQWTKLCNIYTRFCEQ) the chain is Extracellular. Residues 148–168 (IAGSLVLGMLAAVGTAVLSAA) form a helical membrane-spanning segment. Residues 169 to 185 (SARNVFRHYSPGTYAAH) are Cytoplasmic-facing.

The protein belongs to the Casparian strip membrane proteins (CASP) family. In terms of assembly, homodimer and heterodimers.

It localises to the cell membrane. This Sorghum bicolor (Sorghum) protein is CASP-like protein 2C1.